A 462-amino-acid polypeptide reads, in one-letter code: Beta-glucosidase 1A (462 aa).

3 residues coordinate substrate: Q20, H123, and N169. The Proton donor role is filled by E170. Y301 serves as a coordination point for substrate. Residue E365 is the Nucleophile of the active site. Substrate is bound by residues W415 and 422-423 (EW).

Belongs to the glycosyl hydrolase 1 family.

The enzyme catalyses Hydrolysis of terminal, non-reducing beta-D-glucosyl residues with release of beta-D-glucose.. Plays an important role in cellulose degradation. Shows hydrolytic activity against several glycosidic compounds. This is Beta-glucosidase 1A from Phanerodontia chrysosporium (White-rot fungus).